A 168-amino-acid polypeptide reads, in one-letter code: MSVANSRTAVYPGTFDPITNGHIDLVNRAAPLFERVVVGVAYSPSKGPALPLERRVELAQEALAAHANVEVRGFDTLLAHFVRDMGAGVLLRGLRAVSDFEYEFQMASMNRHLIPEVETLFLTPAEQYSFISSSLVREIARLGGDVSGFVPASVVDALRQVRESRAQV.

Thr14 lines the substrate pocket. ATP is bound by residues 14-15 and His22; that span reads TF. Positions 46, 78, and 92 each coordinate substrate. Residues 93 to 95, Glu103, and 128 to 134 contribute to the ATP site; these read GLR and YSFISSS.

The protein belongs to the bacterial CoaD family. In terms of assembly, homohexamer. It depends on Mg(2+) as a cofactor.

The protein localises to the cytoplasm. It carries out the reaction (R)-4'-phosphopantetheine + ATP + H(+) = 3'-dephospho-CoA + diphosphate. It participates in cofactor biosynthesis; coenzyme A biosynthesis; CoA from (R)-pantothenate: step 4/5. Its function is as follows. Reversibly transfers an adenylyl group from ATP to 4'-phosphopantetheine, yielding dephospho-CoA (dPCoA) and pyrophosphate. This is Phosphopantetheine adenylyltransferase from Xanthomonas campestris pv. campestris (strain 8004).